A 583-amino-acid chain; its full sequence is MNNREITSLWSRIIIEELVRLGAGFFCISPGSRSTPLTVAAARHPEAAWKMFPDERSAGFFALGYARATQKPAVLICTSGTAVANYYPAVVEASMDCQPMLILSADRPFELLETGANQTIQQFGIFGGYSRWNFRLPEPSSDVPLRSVITAIDHAVSSATGSLPGPVHINVPFREPFEPLDPDLHDPWLAPVSEWIDTSTPLCRTLSQERVPNRESISSLRKIIAESKLPFMIAGRLNNRSDSLAVGNLARSLNIPLYADLSSGLRLDSSFNPLQLAFQSSQFPERFRPDTVIHFGGPLVARQPSAAVRMWNPRNHIVIKPHANRFGPDHNITLSIEASPALIAEALLGCRTPLPSGCQPLPEPFFQQAKAEIDICCLPDHPVSEISAARIVSSLVTPESGLFLSNSMPVRDMDLYASPSASRPFMTGMNRGASGIDGIISTAAGFAKGLRKPVTLMIGDIAFLHDLNALSLLPSLQVPLCIVVLNNNGGGIFSFLPVASEKDVFETCFATPQSYSIKAAAETFGIESSRPATNRDFEECCRKAAESDRCSIIEVKGNRRNNVELHRTLQSKITALGASYLSR.

This sequence belongs to the TPP enzyme family. MenD subfamily. Homodimer. The cofactor is Mg(2+). It depends on Mn(2+) as a cofactor. Requires thiamine diphosphate as cofactor.

The enzyme catalyses isochorismate + 2-oxoglutarate + H(+) = 5-enolpyruvoyl-6-hydroxy-2-succinyl-cyclohex-3-ene-1-carboxylate + CO2. It participates in quinol/quinone metabolism; 1,4-dihydroxy-2-naphthoate biosynthesis; 1,4-dihydroxy-2-naphthoate from chorismate: step 2/7. It functions in the pathway quinol/quinone metabolism; menaquinone biosynthesis. Functionally, catalyzes the thiamine diphosphate-dependent decarboxylation of 2-oxoglutarate and the subsequent addition of the resulting succinic semialdehyde-thiamine pyrophosphate anion to isochorismate to yield 2-succinyl-5-enolpyruvyl-6-hydroxy-3-cyclohexene-1-carboxylate (SEPHCHC). The chain is 2-succinyl-5-enolpyruvyl-6-hydroxy-3-cyclohexene-1-carboxylate synthase from Chlorobium limicola (strain DSM 245 / NBRC 103803 / 6330).